We begin with the raw amino-acid sequence, 116 residues long: Somatostatin (116 aa).

Residues 1–24 (MLSCRLQCALAALCIVLALGGVTG) form the signal peptide. A propeptide spanning residues 35–88 (LQKSLAAATGKQELAKYFLAELLSEPNQTENDALEPEDLPQAAEQDEMRLELQR) is cleaved from the precursor. T43 is modified (threonine amide). C105 and C116 form a disulfide bridge.

This sequence belongs to the somatostatin family. In terms of processing, C-terminal amidation of the neuronostatin peptide is required for its biological activity, including for the regulation of mean arterial pressure. As to expression, in the pancreas, somatostatin is expressed in delta cells of the islets of Langerhans. In the stomach, it is expressed in parietal cells of oxyntic mucosa and in the small intestine, it is found in the villus (at protein level). Neuronostatin is expressed in the pancreas in delta cells of the islets of Langerhans, as well as in the stomach, in parietal cells of oxyntic mucosa and in the small intestine, in the villus (at protein level).

Its subcellular location is the secreted. Functionally, inhibits the secretion of pituitary hormones, including that of growth hormone/somatotropin (GH1), PRL, ACTH, luteinizing hormone (LH) and TSH. Also impairs ghrelin- and GnRH-stimulated secretion of GH1 and LH; the inhibition of ghrelin-stimulated secretion of GH1 can be further increased by neuronostatin. Its function is as follows. May enhance low-glucose-induced glucagon release by pancreatic alpha cells. This effect may be mediated by binding to GPR107 and PKA activation. May regulate cardiac contractile function. May compromise cardiomyocyte viability. In the central nervous system, may impair memory retention and may affect hippocampal excitability. May also have anxiolytic and anorexigenic effects. May play a role in arterial pressure regulation. May inhibit basal, but not ghrelin- or GnRH-stimulated secretion of GH1 or LH, but does not affect the release of other pituitary hormones, including PRL, ACTH, FSH or TSH. Potentiates inhibitory action of somatostatin on ghrelin-stimulated secretion of GH1, but not that on GnRH-stimulated secretion of LH. This chain is Somatostatin (Sst), found in Mus musculus (Mouse).